Consider the following 249-residue polypeptide: Phosphate import ATP-binding protein PstB (249 aa).

Residues 5–244 (LRIEDLHFWY…PEKDRTEAYV (240 aa)) enclose the ABC transporter domain. An ATP-binding site is contributed by 37–44 (GPSGCGKS).

The protein belongs to the ABC transporter superfamily. Phosphate importer (TC 3.A.1.7) family. The complex is composed of two ATP-binding proteins (PstB), two transmembrane proteins (PstC and PstA) and a solute-binding protein (PstS).

The protein localises to the cell inner membrane. It catalyses the reaction phosphate(out) + ATP + H2O = ADP + 2 phosphate(in) + H(+). Part of the ABC transporter complex PstSACB involved in phosphate import. Responsible for energy coupling to the transport system. The protein is Phosphate import ATP-binding protein PstB of Salinibacter ruber (strain DSM 13855 / M31).